The primary structure comprises 983 residues: Protein translocase subunit SecA (983 aa).

Residues Gln83, 101–105 (GEGKT), and Asp489 contribute to the ATP site. The disordered stretch occupies residues 948–983 (ISSEEENNNEKTNININEDLERTKGEAQQTAKNPNE). The segment covering 973 to 983 (EAQQTAKNPNE) has biased composition (polar residues).

The protein belongs to the SecA family. Monomer and homodimer. Part of the essential Sec protein translocation apparatus which comprises SecA, SecYEG and auxiliary proteins SecDF. Other proteins may also be involved.

The protein localises to the cell membrane. Its subcellular location is the cytoplasm. It carries out the reaction ATP + H2O + cellular proteinSide 1 = ADP + phosphate + cellular proteinSide 2.. In terms of biological role, part of the Sec protein translocase complex. Interacts with the SecYEG preprotein conducting channel. Has a central role in coupling the hydrolysis of ATP to the transfer of proteins into and across the cell membrane, serving as an ATP-driven molecular motor driving the stepwise translocation of polypeptide chains across the membrane. The protein is Protein translocase subunit SecA of Mesomycoplasma hyopneumoniae (strain 7448) (Mycoplasma hyopneumoniae).